A 543-amino-acid chain; its full sequence is CTP synthase (543 aa).

An amidoligase domain region spans residues 1 to 265; that stretch reads MTRYIFVTGG…DDYVVERFGL (265 aa). Ser-13 is a binding site for CTP. Ser-13 is a UTP binding site. ATP-binding positions include 14 to 19 and Asp-71; that span reads SLGKGI. The Mg(2+) site is built by Asp-71 and Glu-139. CTP is bound by residues 146 to 148, 186 to 191, and Lys-222; these read DIE and KTKPTQ. UTP-binding positions include 186 to 191 and Lys-222; that span reads KTKPTQ. The Glutamine amidotransferase type-1 domain maps to 290-541; sequence NIAMVGKYME…VNAALEYKAK (252 aa). L-glutamine is bound at residue Gly-351. Cys-378 serves as the catalytic Nucleophile; for glutamine hydrolysis. Residues 379–382, Glu-402, and Arg-469 contribute to the L-glutamine site; that span reads LGMQ. Catalysis depends on residues His-514 and Glu-516.

It belongs to the CTP synthase family. In terms of assembly, homotetramer.

It carries out the reaction UTP + L-glutamine + ATP + H2O = CTP + L-glutamate + ADP + phosphate + 2 H(+). It catalyses the reaction L-glutamine + H2O = L-glutamate + NH4(+). The catalysed reaction is UTP + NH4(+) + ATP = CTP + ADP + phosphate + 2 H(+). The protein operates within pyrimidine metabolism; CTP biosynthesis via de novo pathway; CTP from UDP: step 2/2. With respect to regulation, allosterically activated by GTP, when glutamine is the substrate; GTP has no effect on the reaction when ammonia is the substrate. The allosteric effector GTP functions by stabilizing the protein conformation that binds the tetrahedral intermediate(s) formed during glutamine hydrolysis. Inhibited by the product CTP, via allosteric rather than competitive inhibition. Functionally, catalyzes the ATP-dependent amination of UTP to CTP with either L-glutamine or ammonia as the source of nitrogen. Regulates intracellular CTP levels through interactions with the four ribonucleotide triphosphates. This is CTP synthase from Stutzerimonas stutzeri (strain A1501) (Pseudomonas stutzeri).